The primary structure comprises 160 residues: S-ribosylhomocysteine lyase (160 aa).

Fe cation-binding residues include H57, H61, and C127.

The protein belongs to the LuxS family. As to quaternary structure, homodimer. Fe cation serves as cofactor.

The catalysed reaction is S-(5-deoxy-D-ribos-5-yl)-L-homocysteine = (S)-4,5-dihydroxypentane-2,3-dione + L-homocysteine. Its function is as follows. Involved in the synthesis of autoinducer 2 (AI-2) which is secreted by bacteria and is used to communicate both the cell density and the metabolic potential of the environment. The regulation of gene expression in response to changes in cell density is called quorum sensing. Catalyzes the transformation of S-ribosylhomocysteine (RHC) to homocysteine (HC) and 4,5-dihydroxy-2,3-pentadione (DPD). This is S-ribosylhomocysteine lyase from Streptococcus agalactiae serotype V (strain ATCC BAA-611 / 2603 V/R).